Reading from the N-terminus, the 340-residue chain is Mitochondrial amidoxime-reducing component 1 (340 aa).

G2 is lipidated: N-myristoyl glycine. The Mitochondrial matrix segment spans residues 2–24 (GAGSWALTLFGFSAFRVPGQPRS). Residues 25–44 (TWLGVAALGLAAVALGTVAW) traverse the membrane as a helical; Signal-anchor for type II membrane protein segment. Residues 45-340 (RRARPRRRRR…VGDPVYLLGQ (296 aa)) are Cytoplasmic-facing. K70, S71, and R95 together coordinate Mo-molybdopterin. The segment at 96–186 (FWLVINEEGN…KMQSCRLVHF (91 aa)) is MOSC N-terminal region. Residues 191–338 (RPRSSRQMKA…IRVGDPVYLL (148 aa)) form the MOSC domain. Residues S214, R241, N243, T274, R275, C276, and Y320 each coordinate Mo-molybdopterin.

In terms of assembly, component of a complex composed of cytochrome b5, NADH-cytochrome b5 reductase and MTARC1. Requires Mo-molybdopterin as cofactor.

The protein resides in the mitochondrion outer membrane. It localises to the membrane. The enzyme catalyses N(omega)-hydroxy-L-arginine + 2 Fe(II)-[cytochrome b5] + 2 H(+) = L-arginine + 2 Fe(III)-[cytochrome b5] + H2O. Its function is as follows. Catalyzes the reduction of N-oxygenated molecules, acting as a counterpart of cytochrome P450 and flavin-containing monooxygenases in metabolic cycles. As a component of prodrug-converting system, reduces a multitude of N-hydroxylated prodrugs particularly amidoximes, leading to increased drug bioavailability. May be involved in mitochondrial N(omega)-hydroxy-L-arginine (NOHA) reduction, regulating endogenous nitric oxide levels and biosynthesis. Postulated to cleave the N-OH bond of N-hydroxylated substrates in concert with electron transfer from NADH to cytochrome b5 reductase then to cytochrome b5, the ultimate electron donor that primes the active site for substrate reduction. This Mus musculus (Mouse) protein is Mitochondrial amidoxime-reducing component 1 (Mtarc1).